The sequence spans 214 residues: 3-isopropylmalate dehydratase small subunit (214 aa).

This sequence belongs to the LeuD family. LeuD type 1 subfamily. Heterodimer of LeuC and LeuD.

It catalyses the reaction (2R,3S)-3-isopropylmalate = (2S)-2-isopropylmalate. The protein operates within amino-acid biosynthesis; L-leucine biosynthesis; L-leucine from 3-methyl-2-oxobutanoate: step 2/4. Catalyzes the isomerization between 2-isopropylmalate and 3-isopropylmalate, via the formation of 2-isopropylmaleate. The sequence is that of 3-isopropylmalate dehydratase small subunit from Methylobacillus flagellatus (strain ATCC 51484 / DSM 6875 / VKM B-1610 / KT).